Here is a 242-residue protein sequence, read N- to C-terminus: Ribonuclease PH (242 aa).

Residues arginine 87 and 125–127 (GTR) each bind phosphate.

The protein belongs to the RNase PH family. Homohexameric ring arranged as a trimer of dimers.

It carries out the reaction tRNA(n+1) + phosphate = tRNA(n) + a ribonucleoside 5'-diphosphate. In terms of biological role, phosphorolytic 3'-5' exoribonuclease that plays an important role in tRNA 3'-end maturation. Removes nucleotide residues following the 3'-CCA terminus of tRNAs; can also add nucleotides to the ends of RNA molecules by using nucleoside diphosphates as substrates, but this may not be physiologically important. Probably plays a role in initiation of 16S rRNA degradation (leading to ribosome degradation) during starvation. This chain is Ribonuclease PH, found in Thermosynechococcus vestitus (strain NIES-2133 / IAM M-273 / BP-1).